Reading from the N-terminus, the 279-residue chain is Thymidylate synthase (279 aa).

Residue 133-134 (RR) coordinates dUMP. Cysteine 154 acts as the Nucleophile in catalysis. DUMP contacts are provided by residues 178-181 (RSND), asparagine 189, and 219-221 (HIY). Aspartate 181 contacts (6R)-5,10-methylene-5,6,7,8-tetrahydrofolate. Alanine 278 is a (6R)-5,10-methylene-5,6,7,8-tetrahydrofolate binding site.

Belongs to the thymidylate synthase family. Bacterial-type ThyA subfamily. As to quaternary structure, homodimer.

It localises to the cytoplasm. The catalysed reaction is dUMP + (6R)-5,10-methylene-5,6,7,8-tetrahydrofolate = 7,8-dihydrofolate + dTMP. Its pathway is pyrimidine metabolism; dTTP biosynthesis. Functionally, catalyzes the reductive methylation of 2'-deoxyuridine-5'-monophosphate (dUMP) to 2'-deoxythymidine-5'-monophosphate (dTMP) while utilizing 5,10-methylenetetrahydrofolate (mTHF) as the methyl donor and reductant in the reaction, yielding dihydrofolate (DHF) as a by-product. This enzymatic reaction provides an intracellular de novo source of dTMP, an essential precursor for DNA biosynthesis. The chain is Thymidylate synthase from Streptococcus agalactiae serotype Ia (strain ATCC 27591 / A909 / CDC SS700).